The chain runs to 279 residues: Large ribosomal subunit protein uL2 (279 aa).

Disordered regions lie at residues 30–59 and 225–279; these read EKSL…GGHK and VMNP…KNKR. Positions 50–59 are enriched in basic residues; the sequence is TTRHKGGGHK. Residues 253 to 268 are compositionally biased toward basic and acidic residues; it reads PEGRTRRPNKESDKLI. Over residues 269-279 the composition is skewed to basic residues; that stretch reads VRRRRTGKNKR.

Belongs to the universal ribosomal protein uL2 family. Part of the 50S ribosomal subunit. Forms a bridge to the 30S subunit in the 70S ribosome.

One of the primary rRNA binding proteins. Required for association of the 30S and 50S subunits to form the 70S ribosome, for tRNA binding and peptide bond formation. It has been suggested to have peptidyltransferase activity; this is somewhat controversial. Makes several contacts with the 16S rRNA in the 70S ribosome. The sequence is that of Large ribosomal subunit protein uL2 from Kocuria rhizophila (strain ATCC 9341 / DSM 348 / NBRC 103217 / DC2201).